Consider the following 43-residue polypeptide: uncharacterized protein (43 aa).

This is an uncharacterized protein from Homo sapiens (Human).